A 995-amino-acid polypeptide reads, in one-letter code: KN motif and ankyrin repeat domain-containing protein 4 (995 aa).

Disordered stretches follow at residues 1 to 29 (MEKT…SVET) and 68 to 127 (TLPR…EVSY). Residues 101-124 (LGTQEQNQSPPLGNAPQASTSRSE) are compositionally biased toward polar residues. Residues 343–404 (SSLKQQVSAL…EGQFHQENAK (62 aa)) adopt a coiled-coil conformation. Disordered stretches follow at residues 443–467 (ESWG…GNQS), 503–558 (EAGT…PTDA), 617–642 (QAHP…TSLK), 663–705 (LQFV…PDHK), and 721–740 (PEGT…VPHS). Over residues 511-523 (GPQGGTRGAGGFL) the composition is skewed to gly residues. Residues 526–549 (SDRKTPPAGREETSSNLPGKEHPG) show a composition bias toward basic and acidic residues. Low complexity predominate over residues 625-640 (PASSSSPPVEISPSTS). Over residues 680–693 (TSGEDSTPEDLSDS) the composition is skewed to acidic residues. Residues 694 to 705 (EAEKKCDGPDHK) are compositionally biased toward basic and acidic residues. 5 ANK repeats span residues 823–853 (NGNT…NVDH), 862–890 (VMIT…NVNI), 895–924 (GGQT…DVNL), 928–958 (DGSS…DSSL), and 962–992 (AGRT…QGRS).

As to expression, strongly expressed in colon, liver, lung, skeletal muscle and kidney.

It is found in the cytoplasm. Functionally, may be involved in the control of cytoskeleton formation by regulating actin polymerization. The protein is KN motif and ankyrin repeat domain-containing protein 4 (KANK4) of Homo sapiens (Human).